A 98-amino-acid chain; its full sequence is MPRSLKKGPFIEFKLEKRILDMNSKGEKKVVKTWSRSSMISPDFVGHTVAVHNGKTHVPVYVTENMVGHKLGEFAPTRLFRGHAGGKAEKGGSAPRKK.

The protein belongs to the universal ribosomal protein uS19 family.

Its function is as follows. Protein S19 forms a complex with S13 that binds strongly to the 16S ribosomal RNA. The chain is Small ribosomal subunit protein uS19 from Chlorobaculum tepidum (strain ATCC 49652 / DSM 12025 / NBRC 103806 / TLS) (Chlorobium tepidum).